A 904-amino-acid polypeptide reads, in one-letter code: Anoctamin-5 (904 aa).

The Cytoplasmic segment spans residues 1–290 (MVEQEGLTAK…HLIRNYFGEK (290 aa)). The helical transmembrane segment at 291–311 (IGIYFVFLGYYTEMLLFAALV) threads the bilayer. Residues 312 to 371 (GLACFIYGLLSMENNRTSTEICDPDIGGQMIMCPLCDEVCDYWRLNTTCLHSKFSHLFDN) are Extracellular-facing. N-linked (GlcNAc...) asparagine glycans are attached at residues asparagine 326, asparagine 357, and asparagine 371. Residues 372–392 (ESTVFFALFMGIWVTLFLEFW) form a helical membrane-spanning segment. Residues 393–453 (KQRQARLEYE…CHRIPWYFVS (61 aa)) are Cytoplasmic-facing. The helical transmembrane segment at 454–474 (GTTVTFGMALLLSSMVSILIY) threads the bilayer. Residues 475–502 (RLSVFATFASFMESEATLQSVKSFFTPQ) are Extracellular-facing. The chain crosses the membrane as a helical span at residues 503 to 523 (LATALSGSCLNCIVILILNFF). The Cytoplasmic segment spans residues 524–548 (YEKISAWITKMEIPRTHQEYESSLT). Residues 549–569 (LKMFLFQFVNYYSSCFYVAFF) traverse the membrane as a helical segment. Residues 570 to 667 (KGKFVGYPGS…RGLFYEYLET (98 aa)) are Extracellular-facing. Residues 668–688 (VIQFGFATLFVASFPLAPLFA) form a helical membrane-spanning segment. At 689-723 (LMNNIMGIRVDAWKLTTQYRRPVAAKAHSIGVWQD) the chain is on the cytoplasmic side. Residues 724 to 744 (ILFGMAIVSVATNAFIVSFTS) traverse the membrane as a helical segment. The Extracellular portion of the chain corresponds to 745–825 (DIIPRLVYFY…FWHVLAAKMT (81 aa)). N-linked (GlcNAc...) asparagine glycosylation is found at asparagine 759, asparagine 769, and asparagine 782. The helical transmembrane segment at 826–846 (FIIVMEHVVFLFKFLLAWLIP) threads the bilayer. At 847–904 (DVPKDVVEKIKREKLMTIKIIHDFELNKLKENLDVEYGNIMKNVLVDEDNSLKAKTTV) the chain is on the cytoplasmic side.

It belongs to the anoctamin family. Highly expressed in skeletal muscle, bone tissues and thyroid gland.

It is found in the endoplasmic reticulum membrane. It localises to the cell membrane. In terms of biological role, plays a role in plasma membrane repair in a process involving annexins. Does not exhibit calcium-activated chloride channel (CaCC) activity. The polypeptide is Anoctamin-5 (Ano5) (Mus musculus (Mouse)).